A 443-amino-acid chain; its full sequence is Palmitoyltransferase pfa5 (443 aa).

Helical transmembrane passes span 17–37 and 57–77; these read IIPP…TKPL and AGAA…ATYL. Residues 96–137 are disordered; it reads CTQNQTGSDGSKHRHRRHRRRKSGHHLSKTTEKTDRSDGGDV. Over residues 107-123 the composition is skewed to basic residues; sequence KHRHRRHRRRKSGHHLS. Basic and acidic residues predominate over residues 124 to 137; the sequence is KTTEKTDRSDGGDV. The DHHC domain maps to 175–225; that stretch reads VYCSTCCQFKTDRAHHCREVDRCVRKMDHFCPWVGGVVSETSFKFFIQFIV. 2 consecutive transmembrane segments (helical) span residues 220-240 and 256-276; these read FIQF…VFAI and WIVC…VAIS. A disordered region spans residues 410–443; that stretch reads AGLEVSTESESADPVGAAETPQHEQRRGKHRRRN.

This sequence belongs to the DHHC palmitoyltransferase family. PFA5 subfamily. Post-translationally, autopalmitoylated.

The protein localises to the membrane. The enzyme catalyses L-cysteinyl-[protein] + hexadecanoyl-CoA = S-hexadecanoyl-L-cysteinyl-[protein] + CoA. This is Palmitoyltransferase pfa5 (pfa5) from Aspergillus fumigatus (strain ATCC MYA-4609 / CBS 101355 / FGSC A1100 / Af293) (Neosartorya fumigata).